The chain runs to 63 residues: Large ribosomal subunit protein bL28 (63 aa).

It belongs to the bacterial ribosomal protein bL28 family.

The chain is Large ribosomal subunit protein bL28 from Syntrophotalea carbinolica (strain DSM 2380 / NBRC 103641 / GraBd1) (Pelobacter carbinolicus).